A 582-amino-acid polypeptide reads, in one-letter code: MQHPGPRLWLVLQVMIGSCTAISSMDLERPGDGKCQPVEIPMCKDIGYNTTRMPNLMGHENQREAAIQLHEFAPLVEYGCHSHLRFFLCSLYAPMCTEQVSTPIPACRVMCEQARLKCSPIMEQFKFRWPDSLDCSKLPNKNDPNYLCMEAPNNGSDEPSRGSGMFPPLFRPQRPHSAQEHPLKDGGPGRAGCDNPGKFHHVEKSESCAPLCTPGVDVYWSRDDKRFAVVWLAIWSVLCFFSSAFTVLTFLIDPSRFRYPERPIIFLSMCYCVYSVGYIIRLFAGAESIACDRDSGQLYVIQEGLESTGCTLVFLVLYYFGMASSLWWVVLTLTWFLAAGKKWGHEAIEANSSYFHLAAWAIPAVKTILILVMRRVAGDELTGVCYVGSMDVNALTGFVLVPLACYLVIGTSFILSGFVALFHIRRVMKTGGENTDKLEKLMVRIGVFSLLYTVPATCVIACYFYERLNMDYWKMLATQHKCKMNNQTKTPDCLMTTSIPAVEVFMVKVSMLLVVGITSGVWVWTSKTLQSWQHVCSRGLKRKSRRKPASVVTSAGIYKKAQHPQKPHLGKYELPAQPSACV.

An N-terminal signal peptide occupies residues 1–21 (MQHPGPRLWLVLQVMIGSCTA). The Extracellular segment spans residues 22–226 (ISSMDLERPG…DVYWSRDDKR (205 aa)). In terms of domain architecture, FZ spans 30–151 (PGDGKCQPVE…NDPNYLCMEA (122 aa)). Cystine bridges form between C35–C96, C43–C89, C80–C118, C107–C148, and C111–C135. N-linked (GlcNAc...) asparagine glycosylation occurs at N49. Residues 153 to 189 (NNGSDEPSRGSGMFPPLFRPQRPHSAQEHPLKDGGPG) are disordered. An N-linked (GlcNAc...) asparagine glycan is attached at N154. Residues 227-247 (FAVVWLAIWSVLCFFSSAFTV) form a helical membrane-spanning segment. The Cytoplasmic portion of the chain corresponds to 248-263 (LTFLIDPSRFRYPERP). Residues 264–284 (IIFLSMCYCVYSVGYIIRLFA) traverse the membrane as a helical segment. The Extracellular segment spans residues 285 to 312 (GAESIACDRDSGQLYVIQEGLESTGCTL). The chain crosses the membrane as a helical span at residues 313–333 (VFLVLYYFGMASSLWWVVLTL). Residues 334–352 (TWFLAAGKKWGHEAIEANS) lie on the Cytoplasmic side of the membrane. Residues 353 to 373 (SYFHLAAWAIPAVKTILILVM) traverse the membrane as a helical segment. Over 374-394 (RRVAGDELTGVCYVGSMDVNA) the chain is Extracellular. Residues 395–415 (LTGFVLVPLACYLVIGTSFIL) traverse the membrane as a helical segment. The Cytoplasmic segment spans residues 416 to 444 (SGFVALFHIRRVMKTGGENTDKLEKLMVR). The helical transmembrane segment at 445–465 (IGVFSLLYTVPATCVIACYFY) threads the bilayer. The Extracellular portion of the chain corresponds to 466–503 (ERLNMDYWKMLATQHKCKMNNQTKTPDCLMTTSIPAVE). The N-linked (GlcNAc...) asparagine glycan is linked to N486. A helical transmembrane segment spans residues 504-524 (VFMVKVSMLLVVGITSGVWVW). Residues 525–582 (TSKTLQSWQHVCSRGLKRKSRRKPASVVTSAGIYKKAQHPQKPHLGKYELPAQPSACV) are Cytoplasmic-facing. Residues 527-532 (KTLQSW) carry the Lys-Thr-X-X-X-Trp motif, mediates interaction with the PDZ domain of Dvl family members motif. A disordered region spans residues 561-582 (AQHPQKPHLGKYELPAQPSACV). The PDZ-binding signature appears at 580 to 582 (ACV).

Belongs to the G-protein coupled receptor Fz/Smo family. As to quaternary structure, interacts with MYOC. Interacts with WNT7B. Post-translationally, ubiquitinated by ZNRF3, leading to its degradation by the proteasome.

The protein resides in the cell membrane. Receptor for Wnt proteins. Functions in the canonical Wnt/beta-catenin signaling pathway. The canonical Wnt/beta-catenin signaling pathway leads to the activation of disheveled proteins, inhibition of GSK-3 kinase, nuclear accumulation of beta-catenin and activation of Wnt target genes. A second signaling pathway involving PKC and calcium fluxes has been seen for some family members, but it is not yet clear if it represents a distinct pathway or if it can be integrated in the canonical pathway, as PKC seems to be required for Wnt-mediated inactivation of GSK-3 kinase. Both pathways seem to involve interactions with G-proteins. May be involved in transduction and intercellular transmission of polarity information during tissue morphogenesis and/or in differentiated tissues. The polypeptide is Frizzled-10 (Fzd10) (Mus musculus (Mouse)).